The following is a 1853-amino-acid chain: DNA-directed RNA polymerase II subunit RPB1 (1853 aa).

8 residues coordinate Zn(2+): C66, C69, C76, H79, C106, C109, C149, and C177. The interval 256–268 is lid loop; it reads PAVVTFGSAKNQD. The interval 314–331 is rudder loop; that stretch reads NCIPGLPTATQKGGRPLK. Mg(2+) contacts are provided by D489, D491, and D493. The tract at residues 827 to 839 is bridging helix; that stretch reads PSEFFFHAMGGRE. K1260 participates in a covalent cross-link: Glycyl lysine isopeptide (Lys-Gly) (interchain with G-Cter in ubiquitin). Disordered regions lie at residues 1520–1568 and 1589–1853; these read PWSP…PRTP and SPHY…DPQN. Composition is skewed to low complexity over residues 1589–1811 and 1821–1853; these read SPHY…TPSP and YSPS…DPQN. 26 tandem repeats follow at residues 1592–1598, 1599–1605, 1616–1622, 1623–1629, 1630–1636, 1637–1643, 1644–1650, 1651–1657, 1658–1664, 1665–1671, 1679–1685, 1686–1692, 1693–1699, 1700–1706, 1707–1713, 1717–1723, 1724–1730, 1731–1737, 1752–1758, 1759–1765, 1779–1785, 1786–1792, 1800–1806, 1821–1827, 1828–1834, and 1842–1848. A C-terminal domain (CTD); 26 X 7 AA approximate tandem repeats of Y-[ST]-P-[ST]-S-P-[AGKNQRST] region spans residues 1592–1848; that stretch reads YSPTSPSYSP…SPSYSPSSPT (257 aa).

It belongs to the RNA polymerase beta' chain family. As to quaternary structure, component of the RNA polymerase II (Pol II) complex consisting of 12 subunits. Interacts with sig-7. The tandem 7 residues repeats in the C-terminal domain (CTD) can be highly phosphorylated. The phosphorylation activates Pol II. Phosphorylation occurs mainly at residues 'Ser-2' and 'Ser-5' of the heptapeptide repeat and starts at the 3- to 4-cell embryonic stage. This phosphorylation also occurs in the early stages of oocyte development and is not detected in oocytes arrested at the meiotic diakinesis stage. In the somatic lineage, phosphorylation at 'Ser-2' is mediated by cdk-12 downstream of cdk-9 whereas in the germline lineage cdk-12 phosphorylates 'Ser-2' independently of cdk-9. Phosphorylation is likely mediated by cdk-7. May be dephosphorylated by fcp-1 in diakinetic oocytes and in 1-cell and 2-cell embryos. Dephosphorylated at 'Ser-5' of the heptapeptide repeat by ssup-72. The phosphorylation state is believed to result from the balanced action of site-specific CTD kinases and phosphatase, and a 'CTD code' that specifies the position of Pol II within the transcription cycle has been proposed. In terms of processing, following transcription stress, the elongating form of RNA polymerase II (RNA pol IIo) is polyubiquitinated via 'Lys-63'-linkages on Lys-1260 at DNA damage sites without leading to degradation: ubiquitination promotes RNA pol IIo backtracking to allow access by the transcription-coupled nucleotide excision repair (TC-NER) machinery. Subsequent DEF1-dependent polyubiquitination by the elongin complex via 'Lys-48'-linkages may lead to proteasome-mediated degradation; presumably at stalled RNA pol II where TC-NER has failed, to halt global transcription and enable 'last resort' DNA repair pathways.

It localises to the nucleus. Its subcellular location is the chromosome. The enzyme catalyses RNA(n) + a ribonucleoside 5'-triphosphate = RNA(n+1) + diphosphate. Functionally, DNA-dependent RNA polymerase catalyzes the transcription of DNA into RNA using the four ribonucleoside triphosphates as substrates. Largest and catalytic component of RNA polymerase II which synthesizes mRNA precursors and many functional non-coding RNAs. Forms the polymerase active center together with the second largest subunit. Pol II is the central component of the basal RNA polymerase II transcription machinery. It is composed of mobile elements that move relative to each other. RPB1 is part of the core element with the central large cleft, the clamp element that moves to open and close the cleft and the jaws that are thought to grab the incoming DNA template. At the start of transcription, a single-stranded DNA template strand of the promoter is positioned within the central active site cleft of Pol II. A bridging helix emanates from RPB1 and crosses the cleft near the catalytic site and is thought to promote translocation of Pol II by acting as a ratchet that moves the RNA-DNA hybrid through the active site by switching from straight to bent conformations at each step of nucleotide addition. During transcription elongation, Pol II moves on the template as the transcript elongates. Elongation is influenced by the phosphorylation status of the C-terminal domain (CTD) of Pol II largest subunit (RPB1), which serves as a platform for assembly of factors that regulate transcription initiation, elongation, termination and mRNA processing. Involved in the transcription of several genes including those involved in embryogenesis. This chain is DNA-directed RNA polymerase II subunit RPB1, found in Caenorhabditis briggsae.